A 203-amino-acid polypeptide reads, in one-letter code: Interferon type B (203 aa).

The N-terminal stretch at 1-27 (MTANHQSPGMHSILLLLLLPALTTTFS) is a signal peptide. Intrachain disulfides connect cysteine 28–cysteine 125 and cysteine 57–cysteine 164. N-linked (GlcNAc...) asparagine glycans are attached at residues asparagine 37 and asparagine 160.

This sequence belongs to the alpha/beta interferon family.

It is found in the secreted. In terms of biological role, has antiviral activities. This Gallus gallus (Chicken) protein is Interferon type B (IFNB).